Reading from the N-terminus, the 325-residue chain is HPr kinase/phosphorylase (325 aa).

Catalysis depends on residues histidine 152 and lysine 173. Residue 167 to 174 participates in ATP binding; it reads GESGLGKS. Mg(2+) is bound at residue serine 174. Residue aspartate 191 is the Proton acceptor; for phosphorylation activity. Proton donor; for dephosphorylation activity of the active site. Residues 215 to 224 are important for the catalytic mechanism of both phosphorylation and dephosphorylation; sequence LEVRGIGLLD. Glutamate 216 contacts Mg(2+). Residue arginine 258 is part of the active site. The important for the catalytic mechanism of dephosphorylation stretch occupies residues 279–284; that stretch reads AVDAGR.

Belongs to the HPrK/P family. In terms of assembly, homohexamer. Requires Mg(2+) as cofactor.

It catalyses the reaction [HPr protein]-L-serine + ATP = [HPr protein]-O-phospho-L-serine + ADP + H(+). The enzyme catalyses [HPr protein]-O-phospho-L-serine + phosphate + H(+) = [HPr protein]-L-serine + diphosphate. Catalyzes the ATP- as well as the pyrophosphate-dependent phosphorylation of a specific serine residue in HPr, a phosphocarrier protein of the phosphoenolpyruvate-dependent sugar phosphotransferase system (PTS). HprK/P also catalyzes the pyrophosphate-producing, inorganic phosphate-dependent dephosphorylation (phosphorolysis) of seryl-phosphorylated HPr (P-Ser-HPr). The protein is HPr kinase/phosphorylase of Leptothrix cholodnii (strain ATCC 51168 / LMG 8142 / SP-6) (Leptothrix discophora (strain SP-6)).